Reading from the N-terminus, the 463-residue chain is Secretogranin-3 (463 aa).

The signal sequence occupies residues 1–20; the sequence is MGPKYVFITAIIGVFWHVQG. Disordered regions lie at residues 87–111, 225–267, and 353–398; these read VKRSGSVRSSVGGHRGTLDDADSTK, DDDK…PEED, and EDKN…KGKA. Basic and acidic residues-rich tracts occupy residues 102–111 and 229–262; these read GTLDDADSTK and QEGKMETRNKNEDRESSETKNEDSFSSKERRNEL.

Interacts with CHGA. Interacts with secretogranin II/SCG2. Interacts (via C-terminus) with CPE.

It is found in the cytoplasmic vesicle. Its subcellular location is the secretory vesicle. The protein resides in the secretory vesicle membrane. The protein localises to the secreted. Its function is as follows. Member of the granin protein family that regulates the biogenesis of secretory granules. Acts as a sorting receptor for intragranular proteins including chromogranin A/CHGA. May also play a role in angiogenesis. Promotes endothelial proliferation, migration and tube formation through MEK/ERK signaling pathway. The protein is Secretogranin-3 (scg3) of Xenopus tropicalis (Western clawed frog).